The following is a 96-amino-acid chain: Prokineticin Bm8-d (96 aa).

The N-terminal stretch at 1–19 (MKCFAQIVVLLLVIAFSHG) is a signal peptide. Cystine bridges form between Cys-26/Cys-38, Cys-32/Cys-50, Cys-37/Cys-78, Cys-60/Cys-86, and Cys-80/Cys-95.

It belongs to the AVIT (prokineticin) family. As to expression, expressed by the skin glands.

The protein resides in the secreted. Functionally, potent agonist for both PKR1/PROKR1 and PKR2/PROKR2, and inducer of a potent and long-lasting hyperalgesia. Also potentiates capsaicin-induced TRPV1 current, when tested on DRG neurons. At subnanomolar concentrations, this protein both induces potent chemotaxis of macrophages and stimulates LPS-induced production of the pro-inflammatory cytokines IL-1 and IL-12. In vivo, potently stimulates the contraction of the guinea-pig gastrointestinal (GI) smooth muscle (nanomolar concentration). The polypeptide is Prokineticin Bm8-d (Bombina maxima (Giant fire-bellied toad)).